The chain runs to 311 residues: NAD kinase (311 aa).

The active-site Proton acceptor is aspartate 88. NAD(+)-binding positions include 88–89, 162–163, arginine 190, aspartate 192, valine 200, and 203–208; these read DG, NE, and TAHNLS.

The protein belongs to the NAD kinase family. A divalent metal cation is required as a cofactor.

The protein localises to the cytoplasm. It carries out the reaction NAD(+) + ATP = ADP + NADP(+) + H(+). In terms of biological role, involved in the regulation of the intracellular balance of NAD and NADP, and is a key enzyme in the biosynthesis of NADP. Catalyzes specifically the phosphorylation on 2'-hydroxyl of the adenosine moiety of NAD to yield NADP. In Rhodopirellula baltica (strain DSM 10527 / NCIMB 13988 / SH1), this protein is NAD kinase.